The primary structure comprises 386 residues: Probable protein phosphatase 2C 36 (386 aa).

Residues 60-363 form the PPM-type phosphatase domain; sequence ELSVAVVQGN…DDITVIVLFI (304 aa). Positions 94, 95, 295, and 354 each coordinate Mn(2+).

Belongs to the PP2C family. It depends on Mg(2+) as a cofactor. Mn(2+) serves as cofactor.

It catalyses the reaction O-phospho-L-seryl-[protein] + H2O = L-seryl-[protein] + phosphate. The catalysed reaction is O-phospho-L-threonyl-[protein] + H2O = L-threonyl-[protein] + phosphate. The chain is Probable protein phosphatase 2C 36 from Oryza sativa subsp. japonica (Rice).